Consider the following 574-residue polypeptide: PI-PLC X domain-containing protein DDB_G0269228 (574 aa).

The disordered stretch occupies residues 1 to 42 (MFSSIMFKKKPKQNLNENEITSQSTTTTSTLSDSKPSEKKIK). Low complexity predominate over residues 21–34 (TSQSTTTTSTLSDS). The PI-PLC X-box domain occupies 270-449 (GIKSSSLRVP…LKKRIINDDG (180 aa)).

This is PI-PLC X domain-containing protein DDB_G0269228 from Dictyostelium discoideum (Social amoeba).